Consider the following 76-residue polypeptide: Conotoxin Lt6.1 (76 aa).

A signal peptide spans 1-22 (MKLTCVLIIAVLFLMDNQLITA). Residues 23 to 48 (DYPRDEQVYRAVRLRDAMQKSKGSGS) constitute a propeptide that is removed on maturation. Intrachain disulfides connect cysteine 49–cysteine 62, cysteine 56–cysteine 67, and cysteine 61–cysteine 75.

Belongs to the conotoxin O1 superfamily. Expressed by the venom duct.

The protein resides in the secreted. This is Conotoxin Lt6.1 from Conus litteratus (Lettered cone).